The following is a 264-amino-acid chain: MGRVIRAQRKGRANGVYKSHKSGRIAPAQYRVYDFAERQGYIRGCIRDIVHEPGRGAPLAEVAFRDPYRYKTNKEHFIAAEGQYSGQYVYCGLKAQIAVGNVLPINRIPEGTVVCNVEEKVGDRGTFSRASGCYATIIGHSEDGDKTRIRLPSGARKTIPGSCRATVGIVAGGGRTDKPILKAGNQFHKYARKRKSWPRVRGVAMNPVDHPHGGGNHQHIGHPATVSKWASAGQKVGLRAARRTGLVRGGQKEKMAMKAAAAGV.

The protein belongs to the universal ribosomal protein uL2 family.

The protein resides in the cytoplasm. The chain is Large ribosomal subunit protein uL2 (RPL8) from Tetrahymena thermophila (strain SB210).